The primary structure comprises 262 residues: Thiazole synthase (262 aa).

Residue Lys-97 is the Schiff-base intermediate with DXP of the active site. 1-deoxy-D-xylulose 5-phosphate contacts are provided by residues Gly-158, 185 to 186 (AG), and 207 to 208 (NT). The segment at 243 to 262 (DKAQASTPTVGQPFWHSAEY) is disordered.

Belongs to the ThiG family. In terms of assembly, homotetramer. Forms heterodimers with either ThiH or ThiS.

It is found in the cytoplasm. The catalysed reaction is [ThiS sulfur-carrier protein]-C-terminal-Gly-aminoethanethioate + 2-iminoacetate + 1-deoxy-D-xylulose 5-phosphate = [ThiS sulfur-carrier protein]-C-terminal Gly-Gly + 2-[(2R,5Z)-2-carboxy-4-methylthiazol-5(2H)-ylidene]ethyl phosphate + 2 H2O + H(+). The protein operates within cofactor biosynthesis; thiamine diphosphate biosynthesis. Functionally, catalyzes the rearrangement of 1-deoxy-D-xylulose 5-phosphate (DXP) to produce the thiazole phosphate moiety of thiamine. Sulfur is provided by the thiocarboxylate moiety of the carrier protein ThiS. In vitro, sulfur can be provided by H(2)S. The chain is Thiazole synthase from Neisseria meningitidis serogroup C (strain 053442).